An 856-amino-acid polypeptide reads, in one-letter code: Inactive rhomboid protein 2 (856 aa).

The disordered stretch occupies residues 1–115 (MASADKNGGS…PGFRRQASLS (115 aa)). The Cytoplasmic portion of the chain corresponds to 1–409 (MASADKNGGS…HRPYFTYWLT (409 aa)). Serine 90 carries the post-translational modification Phosphoserine. Positions 94–106 (PRSRWQESSEKRP) are enriched in basic and acidic residues. Serine 113 and serine 117 each carry phosphoserine. Residues 165 to 184 (PSQEAPSFQGTESPKPCKMP) form a disordered region. An involved in interaction with FRMD8 region spans residues 191–271 (ARGRAFRHPE…GQRCRVVKRS (81 aa)). Phosphoserine occurs at positions 323, 325, and 328. The helical transmembrane segment at 410-430 (FVHVIITLLVICTYGIAPVGF) threads the bilayer. The Lumenal segment spans residues 431–660 (AQHVTTQLVL…PDQFYRLWLS (230 aa)). The interval 531–553 (GPPMDKSDLGQKRTSGAVCHQDP) is disordered. The helical transmembrane segment at 661–681 (LFLHAGVVHCLVSVVFQMTIL) threads the bilayer. The Cytoplasmic portion of the chain corresponds to 682–692 (RDLEKLAGWHR). The chain crosses the membrane as a helical span at residues 693–713 (IAIIFILSGITGNLASAIFLP). At 714 to 715 (YR) the chain is on the lumenal side. Residues 716 to 736 (AEVGPAGSQFGLLACLFVELF) form a helical membrane-spanning segment. Residues 737–747 (QSWPLLERPWK) lie on the Cytoplasmic side of the membrane. A helical membrane pass occupies residues 748 to 768 (AFLNLSAIVLFLFICGLLPWI). The Lumenal segment spans residues 769-773 (DNIAH). A helical transmembrane segment spans residues 774–794 (IFGFLSGLLLAFAFLPYITFG). The Cytoplasmic portion of the chain corresponds to 795–802 (TSDKYRKR). Residues 803–823 (ALILVSLLAFAGLFAALVLWL) traverse the membrane as a helical segment. Over 824–856 (YIYPINWPWIEHLTCFPFTSRFCEKYELDQVLH) the chain is Lumenal.

It belongs to the peptidase S54 family. As to quaternary structure, interacts with EGF. Interacts (via cytoplasmic N-terminus) with FRMD8/iTAP; this interaction leads to mutual protein stabilization. Interacts with ADAM17/TACE. Found in the epidermis and esophageal epithelium.

Its subcellular location is the endoplasmic reticulum membrane. It localises to the cell membrane. In terms of biological role, regulates ADAM17 protease, a sheddase of the epidermal growth factor (EGF) receptor ligands and TNF, thereby plays a role in sleep, cell survival, proliferation, migration and inflammation. Does not exhibit any protease activity on its own. The sequence is that of Inactive rhomboid protein 2 (RHBDF2) from Homo sapiens (Human).